Reading from the N-terminus, the 485-residue chain is Glutamyl-tRNA(Gln) amidotransferase subunit A (485 aa).

Residues lysine 79 and serine 154 each act as charge relay system in the active site. Serine 178 (acyl-ester intermediate) is an active-site residue.

The protein belongs to the amidase family. GatA subfamily. In terms of assembly, heterotrimer of A, B and C subunits.

It carries out the reaction L-glutamyl-tRNA(Gln) + L-glutamine + ATP + H2O = L-glutaminyl-tRNA(Gln) + L-glutamate + ADP + phosphate + H(+). Its function is as follows. Allows the formation of correctly charged Gln-tRNA(Gln) through the transamidation of misacylated Glu-tRNA(Gln) in organisms which lack glutaminyl-tRNA synthetase. The reaction takes place in the presence of glutamine and ATP through an activated gamma-phospho-Glu-tRNA(Gln). The chain is Glutamyl-tRNA(Gln) amidotransferase subunit A from Staphylococcus haemolyticus (strain JCSC1435).